A 637-amino-acid chain; its full sequence is Cell division cycle-related protein res1/sct1 (637 aa).

The HTH APSES-type domain occupies 6 to 112 (IHKITYSGVE…YSGSAFMPMS (107 aa)). The segment at residues 37–58 (ATQILKIAELDKPRRTRILEKF) is a DNA-binding region (H-T-H motif). The interval 114–137 (FTPQSNRKPTEAYRRNSPVKKSFS) is disordered. ANK repeat units follow at residues 236 to 265 (DGHTALHWAAAMGNLEMMHALLQAGANVVA) and 357 to 386 (HGDTALLICARNGAKKCARLLLSFYASSSI).

In terms of assembly, DSC1 contains cdc10 and sct1/res1.

Acts as a positive regulator of the mitotic cell cycle and as a negative regulator of sexual differentiation. May be involved in the transcriptional regulation of the cdc22 and cdt1 genes. Is an integral component of the DSC1-like complex. This is Cell division cycle-related protein res1/sct1 (res1) from Schizosaccharomyces pombe (strain 972 / ATCC 24843) (Fission yeast).